We begin with the raw amino-acid sequence, 630 residues long: Plastin-1 (630 aa).

Met1 carries the N-acetylmethionine modification. EF-hand domains lie at Glu11–Pro46 and Lys51–Lys86. The Ca(2+) site is built by Asp24, Asp26, Ser28, Tyr30, Glu35, Asp64, Asn66, Asp68, Arg70, and Glu75. Actin-binding regions lie at residues Thr108–Lys381 and Pro382–Leu626. Calponin-homology (CH) domains are found at residues Glu122 to Leu238, Leu266 to Pro377, Ser396 to Thr505, and Lys517 to Leu626.

In terms of assembly, monomer. Phosphorylated.

Its subcellular location is the cytoplasm. It localises to the cell projection. The protein localises to the stereocilium. In terms of biological role, actin-bundling protein. In the inner ear, it is required for stereocilia formation. Mediates liquid packing of actin filaments that is necessary for stereocilia to grow to their proper dimensions. This is Plastin-1 (PLS1) from Bos taurus (Bovine).